The primary structure comprises 373 residues: tRNA N6-adenosine threonylcarbamoyltransferase (373 aa).

H128, H132, and Y149 together coordinate a divalent metal cation. Substrate contacts are provided by residues Y149–G153, D181, G196, E200, and N302. D331 is a binding site for a divalent metal cation.

This sequence belongs to the KAE1 / TsaD family. In terms of assembly, component of the EKC/KEOPS complex composed of at least BUD32, CGI121, GON7, KAE1 and PCC1; the whole complex dimerizes. The cofactor is a divalent metal cation.

Its subcellular location is the cytoplasm. The protein localises to the nucleus. The enzyme catalyses L-threonylcarbamoyladenylate + adenosine(37) in tRNA = N(6)-L-threonylcarbamoyladenosine(37) in tRNA + AMP + H(+). Component of the EKC/KEOPS complex that is required for the formation of a threonylcarbamoyl group on adenosine at position 37 (t(6)A37) in tRNAs that read codons beginning with adenine. The complex is probably involved in the transfer of the threonylcarbamoyl moiety of threonylcarbamoyl-AMP (TC-AMP) to the N6 group of A37. KAE1 likely plays a direct catalytic role in this reaction, but requires other protein(s) of the complex to fulfill this activity. The EKC/KEOPS complex also promotes both telomere uncapping and telomere elongation. The complex is required for efficient recruitment of transcriptional coactivators. In Candida glabrata (strain ATCC 2001 / BCRC 20586 / JCM 3761 / NBRC 0622 / NRRL Y-65 / CBS 138) (Yeast), this protein is tRNA N6-adenosine threonylcarbamoyltransferase.